The following is a 466-amino-acid chain: Asparagine--tRNA ligase (466 aa).

It belongs to the class-II aminoacyl-tRNA synthetase family. As to quaternary structure, homodimer.

Its subcellular location is the cytoplasm. It carries out the reaction tRNA(Asn) + L-asparagine + ATP = L-asparaginyl-tRNA(Asn) + AMP + diphosphate + H(+). The protein is Asparagine--tRNA ligase of Enterobacter sp. (strain 638).